A 311-amino-acid chain; its full sequence is Methionyl-tRNA formyltransferase (311 aa).

A (6S)-5,6,7,8-tetrahydrofolate-binding site is contributed by 110-113 (SLLP).

This sequence belongs to the Fmt family.

The catalysed reaction is L-methionyl-tRNA(fMet) + (6R)-10-formyltetrahydrofolate = N-formyl-L-methionyl-tRNA(fMet) + (6S)-5,6,7,8-tetrahydrofolate + H(+). Its function is as follows. Attaches a formyl group to the free amino group of methionyl-tRNA(fMet). The formyl group appears to play a dual role in the initiator identity of N-formylmethionyl-tRNA by promoting its recognition by IF2 and preventing the misappropriation of this tRNA by the elongation apparatus. In Streptococcus pyogenes serotype M12 (strain MGAS2096), this protein is Methionyl-tRNA formyltransferase.